Reading from the N-terminus, the 512-residue chain is Bifunctional purine biosynthesis protein PurH (512 aa).

Residues M1–V146 enclose the MGS-like domain.

The protein belongs to the PurH family.

It carries out the reaction (6R)-10-formyltetrahydrofolate + 5-amino-1-(5-phospho-beta-D-ribosyl)imidazole-4-carboxamide = 5-formamido-1-(5-phospho-D-ribosyl)imidazole-4-carboxamide + (6S)-5,6,7,8-tetrahydrofolate. It catalyses the reaction IMP + H2O = 5-formamido-1-(5-phospho-D-ribosyl)imidazole-4-carboxamide. The protein operates within purine metabolism; IMP biosynthesis via de novo pathway; 5-formamido-1-(5-phospho-D-ribosyl)imidazole-4-carboxamide from 5-amino-1-(5-phospho-D-ribosyl)imidazole-4-carboxamide (10-formyl THF route): step 1/1. It functions in the pathway purine metabolism; IMP biosynthesis via de novo pathway; IMP from 5-formamido-1-(5-phospho-D-ribosyl)imidazole-4-carboxamide: step 1/1. The polypeptide is Bifunctional purine biosynthesis protein PurH (Bacillus subtilis (strain 168)).